Reading from the N-terminus, the 300-residue chain is tRNA pseudouridine synthase B (300 aa).

D38 serves as the catalytic Nucleophile.

The protein belongs to the pseudouridine synthase TruB family. Type 1 subfamily.

It carries out the reaction uridine(55) in tRNA = pseudouridine(55) in tRNA. Responsible for synthesis of pseudouridine from uracil-55 in the psi GC loop of transfer RNAs. In Dehalococcoides mccartyi (strain ATCC BAA-2100 / JCM 16839 / KCTC 5957 / BAV1), this protein is tRNA pseudouridine synthase B.